We begin with the raw amino-acid sequence, 215 residues long: Nucleoredoxin-like protein 1 (215 aa).

One can recognise a Thioredoxin; atypical domain in the interval 1–164; that stretch reads MVDLFLGKVL…GAELIDRNFM (164 aa). The interval 190 to 215 is disordered; it reads DEKKKKKKRDDDDDDDDGGGGGGPWG.

It belongs to the nucleoredoxin family.

The protein localises to the cell projection. Its subcellular location is the cilium. The protein resides in the photoreceptor outer segment. In terms of biological role, plays an important role in retinal cone photoreceptor survival. May play a role in cone cell viability, slowing down cone degeneration, does not seem to play a role in degenerating rods. The sequence is that of Nucleoredoxin-like protein 1 (nxnl1) from Danio rerio (Zebrafish).